A 2530-amino-acid polypeptide reads, in one-letter code: Agglutinin-like protein 2 (2530 aa).

The first 17 residues, 1 to 17 (MLLQFLLLSLCVSVATA), serve as a signal peptide directing secretion. Intrachain disulfides connect cysteine 73-cysteine 150, cysteine 96-cysteine 112, cysteine 205-cysteine 297, and cysteine 227-cysteine 256. N-linked (GlcNAc...) asparagine glycosylation is found at asparagine 253 and asparagine 315. ALS repeat units follow at residues 364–395 (TTITTSYVGVTTSYSTKTAPIGETATVIVDVP), 400–431 (TTVTSEWTGTITTTTTRTNPTDSIDTVVVQVP), 437–468 (VTTTEYWSQSYATTTTVTAPPGGTDSVIIREP), 473–504 (VTTTEYWSQSYATSSTVTAPPGGTDTVIIREP), 509–540 (VTTTEYWSQSYATTTTVTAPPGGTDSVIIREP), and 545–576 (VTTTEYWSQSFATTTTITAPPGETDTVLIREP). Asparagine 578 carries an N-linked (GlcNAc...) asparagine glycan. An ALS 7 repeat occupies 581-612 (VTTTEYWSQSYVTTSTITAPPGGTDTVIIREP). N-linked (GlcNAc...) asparagine glycosylation is present at asparagine 614. ALS repeat units follow at residues 617-648 (VTTTEYWSQSYATTTTVTAPPGGTDTVIIREP), 653-684 (VTTTEYWSQSYATTTTVTGPPGGTDTVIIREP), 689-720 (VTTTEYWSQSYATTTTVTAPPGGTDTVIIREP), 725-756 (VTTTEYWSQSYATTTTVTGPPGGTDTVIIREP), 761-792 (VTTTEYWSQSYATTTTVTAPPGGTATVIIREP), 797-828 (VTTTEYWSQSYATTTTVTGPPGGTDTVIIREP), and 833-864 (VTTTEYWSQSYATTTTVTAPPGGTATVIIREP). An N-linked (GlcNAc...) asparagine glycan is attached at asparagine 866. 4 ALS repeats span residues 869 to 900 (VTTTEYWSQSYATTTTVTGPPGGTDTVIIREP), 905 to 936 (VTTTEYWSQSYATTTTVTAPPGGTATVIIREP), 941 to 972 (VTTTEYWSQSYATTTTVTGPPGGTDTVIIREP), and 977 to 1008 (VTTTEYWSQSYATTTTVTAPPGGTATVIIREP). The span at 954–967 (TTTVTGPPGGTDTV) shows a compositional bias: low complexity. The tract at residues 954-975 (TTTVTGPPGGTDTVIIREPPNP) is disordered. The N-linked (GlcNAc...) asparagine glycan is linked to asparagine 1010. ALS repeat units lie at residues 1013-1044 (VTTTEYWSQSYATTTTVTGPPGGTDTVIIREP), 1049-1077 (VTTTEYWSQSYATTTTVTAPPGGTATVII), 1085-1116 (VTTTEYWSQSYATTTTVTGPPGGTDTVIIREP), and 1121-1152 (VTTTEYWSQSYATTTTVTAPPGGTATVIIREP). The N-linked (GlcNAc...) asparagine glycan is linked to asparagine 1154. ALS repeat units follow at residues 1157–1188 (VTTTEYWSQSYATTTTVTGPPGGTDTVIIREP), 1193–1224 (VTTTEYWSQSFATTTTVTAPPGGTDSVIIREP), 1229–1260 (VTTTEYWSQSYATTTTVTAPPGGTDSVIIREP), 1265–1296 (VTTTEYWSQSFATTTTVTAPPGGTDSVIIREP), 1301–1332 (VTTTEYWSQSYATTTTVTAPPGGTDSVIIREP), and 1337–1368 (VTTTEYWSQSYATTTTVTAPPGGTATVIIREP). Asparagine 1370 is a glycosylation site (N-linked (GlcNAc...) asparagine). Residues 1373–1404 (VTTTEYWSQSYATTTTVTAPPGGTATVIIREP) form an ALS 29 repeat. Asparagine 1406 carries N-linked (GlcNAc...) asparagine glycosylation. The stretch at 1409-1440 (VTTTEYWSQSYATTTTITAPPGDTDTVIIREP) is one ALS 30 repeat. N-linked (GlcNAc...) asparagine glycosylation occurs at asparagine 1442. 2 ALS repeats span residues 1445 to 1476 (VTTTEYWSQSFATTTTVTAPPGGTDSVIIREP) and 1481 to 1512 (VTTTEYWSQSYATTTTVTAPPGGTATVIIREP). Asparagine 1514 is a glycosylation site (N-linked (GlcNAc...) asparagine). The stretch at 1517-1548 (VTTTEYWSQSYATTTTVTAPPGGTATVIIREP) is one ALS 33 repeat. Asparagine 1550 carries an N-linked (GlcNAc...) asparagine glycan. Residues 1553–1584 (VTTTEYWSQSYATTTTITAPPGDTDTVIIREP) form an ALS 34 repeat. N-linked (GlcNAc...) asparagine glycosylation occurs at asparagine 1586. The ALS 35 repeat unit spans residues 1589–1620 (VTTTEYWSQSYATTTTVTAPPGGTDTVIIREP). Asparagine 1622 is a glycosylation site (N-linked (GlcNAc...) asparagine). The ALS 36 repeat unit spans residues 1625 to 1656 (VTTTEYWSQSYATTTTVTAPPGGTATVIIREP). Residue asparagine 1658 is glycosylated (N-linked (GlcNAc...) asparagine). ALS repeat units lie at residues 1661 to 1692 (VTTTEYWSQSYATTTTVTGPPGSTDTVIIREP) and 1697 to 1728 (VTTTEYWSQSYATTTTVTAPPGGTATVIIREP). Asparagine 1730 carries an N-linked (GlcNAc...) asparagine glycan. One copy of the ALS 39 repeat lies at 1733–1764 (VTTTEYWSQSYATTTTVTAPPGGTDTVIIREP). Asparagine 1766 is a glycosylation site (N-linked (GlcNAc...) asparagine). ALS repeat units lie at residues 1769-1800 (VTTTEYWSQSYATTTTVTAPPGGTDTVIIREP) and 1805-1836 (VTTTEYWSQSYATTTTVTAPPGGTATVIIREP). A glycan (N-linked (GlcNAc...) asparagine) is linked at asparagine 1838. ALS repeat units follow at residues 1841 to 1872 (VTTTEYWSESYATTTTVTGPPGGTDVILIREP) and 1877 to 1907 (VTTTEYWSESYATTTTITAPPGATDSVRIRE). N-linked (GlcNAc...) asparagine glycosylation occurs at asparagine 1910. ALS repeat units follow at residues 1913-1944 (VTTTEYWSQSYATTTTVTAPPGGTDSVIIREP) and 1949-1980 (VTTTEYWSQSYATTTTVTAPPGGTATVIIREP). Asparagine 1982 carries N-linked (GlcNAc...) asparagine glycosylation. ALS repeat units follow at residues 1985-2016 (VTTTEYWSQSYATTTTVTAPPGGTDTVIIREP), 2021-2052 (VTTTEYWSQSYATTTTVTAPPGGTATVIIREP), and 2057-2088 (VTTTEYWSQSYATTTTVTAPPGGTATVIIREP). N-linked (GlcNAc...) asparagine glycosylation is present at asparagine 2090. ALS repeat units follow at residues 2093–2124 (VTTTEYWSQSYATTTTVTGPPGGTDTVIIREP) and 2129–2157 (VTTTEYWSQSYATTLTITAPPGGTNSVII). A glycan (N-linked (GlcNAc...) asparagine) is linked at asparagine 2197. 2 disordered regions span residues 2200–2235 (VTHLPSSSSKPVDIPSSDVVTSTNDNSLTSLTGSEN) and 2274–2494 (TTII…QQTT). Positions 2204-2233 (PSSSSKPVDIPSSDVVTSTNDNSLTSLTGS) are enriched in low complexity. N-linked (GlcNAc...) asparagine glycosylation occurs at asparagine 2281. A compositionally biased stretch (low complexity) spans 2282-2296 (GSGKSKSGELSSTGS). 2 stretches are compositionally biased toward polar residues: residues 2329-2420 (STET…SATA) and 2429-2452 (NGATTKGQDTAGGNSNGSTATTNI). N-linked (GlcNAc...) asparagine glycans are attached at residues asparagine 2444 and asparagine 2466. Composition is skewed to low complexity over residues 2453-2471 (QGGNNEPGNQPGTNTTGEP) and 2482-2494 (SISQPTTLSQQTT). The GPI-anchor amidated aspartate moiety is linked to residue aspartate 2507. A propeptide spans 2508–2530 (GSGSIVQHSGWLYVLLTAISIFF) (removed in mature form).

Belongs to the ALS family. In terms of processing, N-glycosylated and O-glycosylated. The GPI-anchor is attached to the protein in the endoplasmic reticulum and serves to target the protein to the cell surface. There, the glucosamine-inositol phospholipid moiety is cleaved off and the GPI-modified mannoprotein is covalently attached via its lipidless GPI glycan remnant to the 1,6-beta-glucan of the outer cell wall layer.

It is found in the cell membrane. Its subcellular location is the secreted. It localises to the cell wall. Functionally, cell surface adhesion protein which mediates both yeast-to-host tissue adherence and yeast aggregation. Plays an important role in the pathogenesis of C.albicans infections. The sequence is that of Agglutinin-like protein 2 (ALS2) from Candida albicans (strain SC5314 / ATCC MYA-2876) (Yeast).